Consider the following 114-residue polypeptide: uncharacterized protein (114 aa).

It localises to the mitochondrion. This is an uncharacterized protein from Arabidopsis thaliana (Mouse-ear cress).